Consider the following 177-residue polypeptide: Ribosome rescue factor SmrB (177 aa).

The interval 22-45 is disordered; it reads SKKLRQDTIIHQPSKNFSEQQKQR. Residues 30–41 are compositionally biased toward polar residues; the sequence is IIHQPSKNFSEQ. In terms of domain architecture, Smr spans 98 to 173; sequence LDMHGMKQDE…GAGAILVLLS (76 aa).

The protein belongs to the SmrB family. As to quaternary structure, associates with collided ribosomes, but not with correctly translating polysomes.

Acts as a ribosome collision sensor. Detects stalled/collided disomes (pairs of ribosomes where the leading ribosome is stalled and a second ribosome has collided with it) and endonucleolytically cleaves mRNA at the 5' boundary of the stalled ribosome. Stalled/collided disomes form a new interface (primarily via the 30S subunits) that binds SmrB. Cleaved mRNA becomes available for tmRNA ligation, leading to ribosomal subunit dissociation and rescue of stalled ribosomes. This is Ribosome rescue factor SmrB from Aliivibrio salmonicida (strain LFI1238) (Vibrio salmonicida (strain LFI1238)).